Consider the following 86-residue polypeptide: Small ribosomal subunit protein uS17 (86 aa).

The protein belongs to the universal ribosomal protein uS17 family. As to quaternary structure, part of the 30S ribosomal subunit.

Functionally, one of the primary rRNA binding proteins, it binds specifically to the 5'-end of 16S ribosomal RNA. This is Small ribosomal subunit protein uS17 from Bifidobacterium longum (strain DJO10A).